A 415-amino-acid polypeptide reads, in one-letter code: Protein ROH1A (415 aa).

The tract at residues 184-219 is disordered; the sequence is VSGGGGGGGGGNKTTERSWSFGRRSGGSSAASKGGA. The span at 185-195 shows a compositional bias: gly residues; that stretch reads SGGGGGGGGGN. Over residues 200 to 219 the composition is skewed to low complexity; it reads RSWSFGRRSGGSSAASKGGA. The chain crosses the membrane as a helical span at residues 263–283; it reads MFIMSTVMVFVMWVLTAAVPC.

This sequence belongs to the ROH1 family. As to quaternary structure, interacts with EXO70A1 and EXO70C1. Binds to EXO70C2. As to expression, mainly expressed in cells expanding in a polar manner such as pollen and root hairs.

Its subcellular location is the membrane. It localises to the cytoplasm. The protein localises to the cytosol. Functionally, required for seed coat mucilage deposition. This Arabidopsis thaliana (Mouse-ear cress) protein is Protein ROH1A.